Consider the following 128-residue polypeptide: Probable soluble cytochrome b562 2 (128 aa).

Residues 1–22 form the signal peptide; sequence MGKTLMALITAALLSTSSLVMA. M29 and H124 together coordinate heme b.

Belongs to the cytochrome b562 family. It depends on heme b as a cofactor.

It is found in the periplasm. Its function is as follows. Electron-transport protein of unknown function. The protein is Probable soluble cytochrome b562 2 (cybC2) of Yersinia pestis.